Consider the following 338-residue polypeptide: Glycerol-3-phosphate dehydrogenase [NAD(P)+] (338 aa).

Residues S13, W14, and K108 each contribute to the NADPH site. Residues K108, G139, and S141 each contribute to the sn-glycerol 3-phosphate site. NADPH is bound at residue A143. Sn-glycerol 3-phosphate contacts are provided by K194, D247, S257, R258, and N259. K194 functions as the Proton acceptor in the catalytic mechanism. R258 is an NADPH binding site. Positions 282 and 284 each coordinate NADPH.

It belongs to the NAD-dependent glycerol-3-phosphate dehydrogenase family.

It localises to the cytoplasm. The enzyme catalyses sn-glycerol 3-phosphate + NAD(+) = dihydroxyacetone phosphate + NADH + H(+). The catalysed reaction is sn-glycerol 3-phosphate + NADP(+) = dihydroxyacetone phosphate + NADPH + H(+). Its pathway is membrane lipid metabolism; glycerophospholipid metabolism. Functionally, catalyzes the reduction of the glycolytic intermediate dihydroxyacetone phosphate (DHAP) to sn-glycerol 3-phosphate (G3P), the key precursor for phospholipid synthesis. In Streptococcus uberis (strain ATCC BAA-854 / 0140J), this protein is Glycerol-3-phosphate dehydrogenase [NAD(P)+].